The chain runs to 703 residues: Capsid protein VP1 (703 aa).

The protein belongs to the caliciviridae capsid protein family. As to quaternary structure, homodimer. Homomultimer. Interacts with the minor capsid protein VP2. May bind to VP3 and Vpg proteins. In terms of processing, cleaved by the viral protease to produce mature capsid protein.

The protein resides in the virion. It is found in the host cytoplasm. Capsid protein self assembles to form an icosahedral capsid with a T=3 symmetry, about 38 nm in diameter, and consisting of 180 capsid proteins. A smaller form of capsid with a diameter of 23 nm might be capsid proteins assembled as icosahedron with T=1 symmetry. The capsid encapsulates the genomic RNA and is decorated with VP2 proteins. The chain is Capsid protein VP1 from San Miguel sea lion virus serotype 4 (SMSV-4).